Consider the following 423-residue polypeptide: Gamma-glutamyl phosphate reductase (423 aa).

This sequence belongs to the gamma-glutamyl phosphate reductase family.

The protein localises to the cytoplasm. The catalysed reaction is L-glutamate 5-semialdehyde + phosphate + NADP(+) = L-glutamyl 5-phosphate + NADPH + H(+). The protein operates within amino-acid biosynthesis; L-proline biosynthesis; L-glutamate 5-semialdehyde from L-glutamate: step 2/2. Functionally, catalyzes the NADPH-dependent reduction of L-glutamate 5-phosphate into L-glutamate 5-semialdehyde and phosphate. The product spontaneously undergoes cyclization to form 1-pyrroline-5-carboxylate. The sequence is that of Gamma-glutamyl phosphate reductase from Pseudomonas putida (strain GB-1).